We begin with the raw amino-acid sequence, 441 residues long: Membrane-bound protease PH1510 (441 aa).

A signal peptide spans 1 to 20 (MRRILLSMIVLIFLASPILA). A substrate-binding site is contributed by 64-67 (GGRA). Ser97 functions as the Nucleophile in the catalytic mechanism. Position 119 to 124 (119 to 124 (ACRPIL)) interacts with substrate. The Proton donor/acceptor role is filled by Lys138. The next 4 membrane-spanning stretches (helical) occupy residues 239–259 (VAYLLLTLGIWALIIGFLTPG), 271–291 (IILAIIGFGYFGYNSAGILLI), 307–327 (FGLFTVAGLITFIIGGILLFG), and 344–364 (ILIITVGAILAAFFAFGMAAV).

Belongs to the peptidase S14 family. Homodimer.

It localises to the membrane. Its activity is regulated as follows. Inhibited by divalent metal cations, including Mg(2+), Mn(2+), Ca(2+) and Zn(2+). Mildly inhibited by 0.01 % SDS and 0.1% dodecyl-beta-D-maltoside. Activity is nearly abolished by 1 % SDS. In terms of biological role, protease that cleaves its substrates preferentially near hydrophobic or aromatic amino acid residues. Can degrade casein and the stomatin homolog PH1511 (in vitro). The polypeptide is Membrane-bound protease PH1510 (Pyrococcus horikoshii (strain ATCC 700860 / DSM 12428 / JCM 9974 / NBRC 100139 / OT-3)).